Here is a 148-residue protein sequence, read N- to C-terminus: Small ribosomal subunit protein bS6 (148 aa).

The disordered stretch occupies residues 96–148; it reads HEEGQSAMLTRRDDRRERDGDDRPRRREGGFDRGDRGDRSPRRPRDNEAGEGA.

It belongs to the bacterial ribosomal protein bS6 family.

Binds together with bS18 to 16S ribosomal RNA. This Brucella suis (strain ATCC 23445 / NCTC 10510) protein is Small ribosomal subunit protein bS6.